We begin with the raw amino-acid sequence, 2248 residues long: Zinc finger protein 407 (2248 aa).

Positions Met1 to Asp32 are enriched in basic and acidic residues. Positions Met1 to Leu84 are disordered. 3 C2H2-type zinc fingers span residues Leu186–His208, His215–His238, and Phe244–His268. Disordered stretches follow at residues Lys291–Asn322 and Ser494–Ser515. Polar residues predominate over residues Ser494–Gly504. 3 consecutive C2H2-type zinc fingers follow at residues Cys528–His551, Phe557–His581, and Phe615–His639. The disordered stretch occupies residues Glu667–Ser700. The span at Glu669–His699 shows a compositional bias: basic and acidic residues. A C2H2-type 7 zinc finger spans residues Phe705 to His728. Residues Leu821–Asn847 form a disordered region. 2 consecutive C2H2-type zinc fingers follow at residues Arg850–His873 and Tyr879–His903. Residues Glu910–Arg962 form a disordered region. 2 C2H2-type zinc fingers span residues Asn1017–His1040 and Phe1046–His1070. Ser1262 carries the phosphoserine modification. C2H2-type zinc fingers lie at residues Phe1444–His1468 and Phe1486–His1509. The C2H2-type 14; degenerate zinc finger occupies Asn1537–His1561. 8 C2H2-type zinc fingers span residues Phe1567–His1589, Tyr1595–His1618, Phe1628–His1650, Phe1656–His1680, Phe1686–His1708, Phe1714–His1736, Tyr1742–His1767, and Tyr1773–His1796.

It localises to the nucleus. May be involved in transcriptional regulation. The chain is Zinc finger protein 407 (ZNF407) from Homo sapiens (Human).